Here is a 130-residue protein sequence, read N- to C-terminus: Arsenate reductase 2.2 (130 aa).

A Rhodanese domain is found at 18-119 (RDPRIAVVDV…WELSGRPVCR (102 aa)). Cys70 acts as the Cysteine persulfide intermediate in catalysis.

The catalysed reaction is [glutaredoxin]-dithiol + arsenate + glutathione + H(+) = glutathionyl-S-S-[glutaredoxin] + arsenite + H2O. Functionally, possesses arsenate reductase activity in vitro. Catalyzes the reduction of arsenate [As(V)] to arsenite [As(III)]. May play a role in arsenic retention in roots. Its function is as follows. Possesses phosphatase activity towards p-nitrophenyl phosphate in vitro. The polypeptide is Arsenate reductase 2.2 (ACR2.2) (Oryza sativa subsp. japonica (Rice)).